The primary structure comprises 686 residues: DNA ligase (686 aa).

NAD(+)-binding positions include 34-38 (DAEYD), 83-84 (SI), and Glu-120. The active-site N6-AMP-lysine intermediate is the Lys-122. The NAD(+) site is built by Arg-143, Glu-180, Lys-298, and Lys-322. 4 residues coordinate Zn(2+): Cys-420, Cys-423, Cys-438, and Cys-444. In terms of domain architecture, BRCT spans 603–686 (QSGGILSGKT…ALLGSNKKNG (84 aa)).

It belongs to the NAD-dependent DNA ligase family. LigA subfamily. Requires Mg(2+) as cofactor. Mn(2+) is required as a cofactor.

It catalyses the reaction NAD(+) + (deoxyribonucleotide)n-3'-hydroxyl + 5'-phospho-(deoxyribonucleotide)m = (deoxyribonucleotide)n+m + AMP + beta-nicotinamide D-nucleotide.. Its function is as follows. DNA ligase that catalyzes the formation of phosphodiester linkages between 5'-phosphoryl and 3'-hydroxyl groups in double-stranded DNA using NAD as a coenzyme and as the energy source for the reaction. It is essential for DNA replication and repair of damaged DNA. The chain is DNA ligase from Thiobacillus denitrificans (strain ATCC 25259 / T1).